Here is a 236-residue protein sequence, read N- to C-terminus: Protein-L-isoaspartate O-methyltransferase 1 (236 aa).

Residue Ser-86 is part of the active site.

Belongs to the methyltransferase superfamily. L-isoaspartyl/D-aspartyl protein methyltransferase family.

It is found in the cytoplasm. It catalyses the reaction [protein]-L-isoaspartate + S-adenosyl-L-methionine = [protein]-L-isoaspartate alpha-methyl ester + S-adenosyl-L-homocysteine. Catalyzes the methyl esterification of L-isoaspartyl residues in peptides and proteins that result from spontaneous decomposition of normal L-aspartyl and L-asparaginyl residues. It plays a role in the repair and/or degradation of damaged proteins. This is Protein-L-isoaspartate O-methyltransferase 1 from Nitrosospira multiformis (strain ATCC 25196 / NCIMB 11849 / C 71).